We begin with the raw amino-acid sequence, 376 residues long: MDIYKFAISPLLFNVVKTDPEWLHQQTIRSFSWLSQTPTSWANQRLQKSLSLYDSHLEQKLFGLNFPNPVGLAAGFDKDGVAAGIWSNLGFGFAELGTVTFHAQPGNPRPRLFRLPLDKAALNRMGFNNLGAAAMATRLVQEKQESTNLIPIGINLGKSKVTPLEEAAQDYLDSFRLLKDLGDYFVVNVSSPNTPGLRSLQDASMLSAILNLLQQENTTHKPIFVKIAPDLDWVAIAEIISLAKTYNLAGIIATNTTIRRDGLKTQVINQTGKSPQEEAGGISGEPLRDRSTEVIRFIWQQTQGEIPIIGVGGIFSPEDAWEKITAGASLIQVYTGWIYEGPLMVRRILEGLLSKLEQNGFNSIREAVGLEIKSKK.

Residues 74 to 78 (AGFDK) and Thr-98 contribute to the FMN site. Lys-78 is a substrate binding site. Position 123-127 (123-127 (NRMGF)) interacts with substrate. Positions 155 and 188 each coordinate FMN. Asn-188 contacts substrate. The active-site Nucleophile is the Ser-191. Asn-193 lines the substrate pocket. Residues Lys-226 and Thr-254 each contribute to the FMN site. 255–256 (NT) is a substrate binding site. FMN-binding positions include Gly-284, Gly-313, and 334–335 (YT).

The protein belongs to the dihydroorotate dehydrogenase family. Type 2 subfamily. In terms of assembly, monomer. It depends on FMN as a cofactor.

The protein localises to the cell membrane. The enzyme catalyses (S)-dihydroorotate + a quinone = orotate + a quinol. It functions in the pathway pyrimidine metabolism; UMP biosynthesis via de novo pathway; orotate from (S)-dihydroorotate (quinone route): step 1/1. In terms of biological role, catalyzes the conversion of dihydroorotate to orotate with quinone as electron acceptor. This Nostoc punctiforme (strain ATCC 29133 / PCC 73102) protein is Dihydroorotate dehydrogenase (quinone).